A 339-amino-acid chain; its full sequence is MILLTGGGTGGHLFPALAVAEELRRRGHPVFYLGAEGGLEARLLPKTPIPHALIPAGKLDRSALRPQEAPKVLQGVLRAQALLRRLRPKAVLSTGGYAGFPGGMAASLLGIPLLLHEQNARLGLANRALAPLAKGLALSVPLALPAPLARKARVVGYPVREVRYPKDEAKRRLGFDPQRPLLLVLGGSQGSLELNERLPPVLKGLPVQVLHQVGERWVERFRPLEGEGYRVEGFVDTPLAMSAADLLLSRAGAGTLAEAAFHGLPAILFPLSPKLDGGAQLANARAYAQAGGAVLGAWDRLSSQILEALEDLEARRRAMARLSPEGAAARLADLLEAFL.

UDP-N-acetyl-alpha-D-glucosamine is bound by residues 9-11 (TGG), asparagine 119, arginine 160, serine 188, and glutamine 280.

This sequence belongs to the glycosyltransferase 28 family. MurG subfamily.

It localises to the cell inner membrane. The enzyme catalyses di-trans,octa-cis-undecaprenyl diphospho-N-acetyl-alpha-D-muramoyl-L-alanyl-D-glutamyl-meso-2,6-diaminopimeloyl-D-alanyl-D-alanine + UDP-N-acetyl-alpha-D-glucosamine = di-trans,octa-cis-undecaprenyl diphospho-[N-acetyl-alpha-D-glucosaminyl-(1-&gt;4)]-N-acetyl-alpha-D-muramoyl-L-alanyl-D-glutamyl-meso-2,6-diaminopimeloyl-D-alanyl-D-alanine + UDP + H(+). The protein operates within cell wall biogenesis; peptidoglycan biosynthesis. In terms of biological role, cell wall formation. Catalyzes the transfer of a GlcNAc subunit on undecaprenyl-pyrophosphoryl-MurNAc-pentapeptide (lipid intermediate I) to form undecaprenyl-pyrophosphoryl-MurNAc-(pentapeptide)GlcNAc (lipid intermediate II). The sequence is that of UDP-N-acetylglucosamine--N-acetylmuramyl-(pentapeptide) pyrophosphoryl-undecaprenol N-acetylglucosamine transferase from Thermus thermophilus (strain ATCC BAA-163 / DSM 7039 / HB27).